A 193-amino-acid polypeptide reads, in one-letter code: Fra a 1-associated protein (193 aa).

Residues 1-27 (MGWVWKDDDEQGGHVNPSAADISPRLD) are disordered.

In terms of assembly, interacts with FRAA1E, FRAA2 and FRAA3.

In Fragaria ananassa (Strawberry), this protein is Fra a 1-associated protein.